Reading from the N-terminus, the 1345-residue chain is Aldehyde oxidase 2 (1345 aa).

Residues aspartate 9 to valine 96 enclose the 2Fe-2S ferredoxin-type domain. 4 residues coordinate [2Fe-2S] cluster: cysteine 48, cysteine 53, cysteine 56, and cysteine 78. A Mo-molybdopterin-binding site is contributed by glutamine 117. Cysteine 118, cysteine 121, cysteine 153, and cysteine 155 together coordinate [2Fe-2S] cluster. A Mo-molybdopterin-binding site is contributed by cysteine 155. Residues phenylalanine 238–lysine 423 enclose the FAD-binding PCMH-type domain. FAD-binding positions include leucine 266–leucine 273, alanine 347, serine 356, histidine 360, aspartate 369, and leucine 413. Residues glycine 812 to phenylalanine 813, alanine 1094 to glycine 1097, glutamine 1209, and leucine 1274 each bind Mo-molybdopterin. Glutamate 1276 (proton acceptor; for azaheterocycle hydroxylase activity) is an active-site residue.

This sequence belongs to the xanthine dehydrogenase family. As to quaternary structure, homodimer. It depends on [2Fe-2S] cluster as a cofactor. The cofactor is FAD. Requires Mo-molybdopterin as cofactor.

It is found in the cytoplasm. The enzyme catalyses an aldehyde + O2 + H2O = a carboxylate + H2O2 + H(+). Functionally, oxidase with broad substrate specificity, oxidizing aromatic azaheterocycles, such as phthalazine, as well as aldehydes, such as benzaldehyde and retinal. The polypeptide is Aldehyde oxidase 2 (Aox2) (Rattus norvegicus (Rat)).